The sequence spans 697 residues: Probable glutamine--tRNA ligase (697 aa).

A 'HIGH' region motif is present at residues 204-214 (PEPNGILHIGH). ATP-binding positions include 205–207 (EPN) and 211–217 (HIGHAKA). The L-glutamine site is built by aspartate 237 and tyrosine 386. Residues threonine 405, 434-435 (RL), and 442-444 (LSK) each bind ATP. The short motif at 441–445 (VLSKR) is the 'KMSKS' region element.

This sequence belongs to the class-I aminoacyl-tRNA synthetase family.

The enzyme catalyses tRNA(Gln) + L-glutamine + ATP = L-glutaminyl-tRNA(Gln) + AMP + diphosphate. This is Probable glutamine--tRNA ligase from Encephalitozoon cuniculi (strain GB-M1) (Microsporidian parasite).